A 66-amino-acid polypeptide reads, in one-letter code: Large ribosomal subunit protein uL29 (66 aa).

This sequence belongs to the universal ribosomal protein uL29 family.

This is Large ribosomal subunit protein uL29 from Bacillus anthracis (strain CDC 684 / NRRL 3495).